A 324-amino-acid chain; its full sequence is Dolichyl-phosphate beta-glucosyltransferase (324 aa).

The Lumenal segment spans residues 1–7 (MAPLLLQ). A helical; Signal-anchor for type II membrane protein transmembrane segment spans residues 8–28 (LAVLGAALAAAALVLISIVAF). Topologically, residues 29-324 (TTATKMPALH…WRLEQTRKMN (296 aa)) are cytoplasmic.

The protein belongs to the glycosyltransferase 2 family. As to expression, expressed in pancreas, placenta, liver, heart, brain, kidney, skeletal muscle, and lung.

The protein localises to the endoplasmic reticulum membrane. The enzyme catalyses a di-trans,poly-cis-dolichyl phosphate + UDP-alpha-D-glucose = a di-trans,poly-cis-dolichyl beta-D-glucosyl phosphate + UDP. The protein operates within protein modification; protein glycosylation. In terms of biological role, dolichyl-phosphate beta-glucosyltransferase that operates in the biosynthetic pathway of dolichol-linked oligosaccharides, the glycan precursors employed in protein asparagine (N)-glycosylation. The assembly of dolichol-linked oligosaccharides begins on the cytosolic side of the endoplasmic reticulum membrane and finishes in its lumen. The sequential addition of sugars to dolichol pyrophosphate produces dolichol-linked oligosaccharides containing fourteen sugars, including two GlcNAcs, nine mannoses and three glucoses. Once assembled, the oligosaccharide is transferred from the lipid to nascent proteins by oligosaccharyltransferases. Dolichyl-phosphate beta-glucosyltransferase produces dolichyl beta-D-glucosyl phosphate/Dol-P-Glc, the glucose donor substrate used sequentially by ALG6, ALG8 and ALG10 to add glucose residues on top of the Man(9)GlcNAc(2)-PP-Dol structure. These are the three last steps in the biosynthetic pathway of dolichol-linked oligosaccharides to produce Glc(3)Man(9)GlcNAc(2)-PP-Dol. The enzyme is most probably active on the cytoplasmic side of the endoplasmic reticulum while its product Dol-P-Glc is the substrate for ALG6, ALG8 and ALG11 in the lumen of the endoplasmic reticulum. The chain is Dolichyl-phosphate beta-glucosyltransferase from Homo sapiens (Human).